Reading from the N-terminus, the 370-residue chain is Pantothenate kinase 3 (370 aa).

The active-site Proton acceptor is glutamate 138. The acetyl-CoA site is built by serine 192, serine 195, and arginine 207.

It belongs to the type II pantothenate kinase family. As to quaternary structure, homodimer. As to expression, highly expressed in the liver.

The protein localises to the cytoplasm. It carries out the reaction (R)-pantothenate + ATP = (R)-4'-phosphopantothenate + ADP + H(+). It functions in the pathway cofactor biosynthesis; coenzyme A biosynthesis; CoA from (R)-pantothenate: step 1/5. With respect to regulation, subject to allosteric regulation, exists in two distinct conformational states, a catalytically incompetent (or open) conformation stabilized by the binding of acetyl(acyl)-CoA, and a catalytically competent (or closed) conformation stabilized by ATP-binding. Acetyl-CoA and its thioesters act as allosteric inhibitors and compete with the ATP-binding site. Strongly inhibited by acetyl-CoA, malonyl-CoA and palmitoyl CoA and modestly inhibited by CoA. Inhibited by calcium hopantenate. Functionally, catalyzes the phosphorylation of pantothenate to generate 4'-phosphopantothenate in the first and rate-determining step of coenzyme A (CoA) synthesis. The protein is Pantothenate kinase 3 (Pank3) of Mus musculus (Mouse).